A 97-amino-acid polypeptide reads, in one-letter code: Citrate lyase acyl carrier protein (97 aa).

Ser14 carries the O-(phosphoribosyl dephospho-coenzyme A)serine modification.

The protein belongs to the CitD family. In terms of assembly, oligomer with a subunit composition of (alpha,beta,gamma)6.

It is found in the cytoplasm. Covalent carrier of the coenzyme of citrate lyase. The protein is Citrate lyase acyl carrier protein of Lactobacillus helveticus (strain DPC 4571).